We begin with the raw amino-acid sequence, 149 residues long: D-aminoacyl-tRNA deacylase (149 aa).

A Gly-cisPro motif, important for rejection of L-amino acids motif is present at residues 138–139 (GP).

It belongs to the DTD family. As to quaternary structure, homodimer.

The protein localises to the cytoplasm. It catalyses the reaction glycyl-tRNA(Ala) + H2O = tRNA(Ala) + glycine + H(+). The enzyme catalyses a D-aminoacyl-tRNA + H2O = a tRNA + a D-alpha-amino acid + H(+). In terms of biological role, an aminoacyl-tRNA editing enzyme that deacylates mischarged D-aminoacyl-tRNAs. Also deacylates mischarged glycyl-tRNA(Ala), protecting cells against glycine mischarging by AlaRS. Acts via tRNA-based rather than protein-based catalysis; rejects L-amino acids rather than detecting D-amino acids in the active site. By recycling D-aminoacyl-tRNA to D-amino acids and free tRNA molecules, this enzyme counteracts the toxicity associated with the formation of D-aminoacyl-tRNA entities in vivo and helps enforce protein L-homochirality. The protein is D-aminoacyl-tRNA deacylase of Chlorobaculum parvum (strain DSM 263 / NCIMB 8327) (Chlorobium vibrioforme subsp. thiosulfatophilum).